The following is a 43-amino-acid chain: Protein PsbN (43 aa).

Residues 7 to 27 (VAIFISCLLVSFTGYALYTAF) traverse the membrane as a helical segment.

This sequence belongs to the PsbN family.

The protein resides in the plastid. The protein localises to the chloroplast thylakoid membrane. In terms of biological role, may play a role in photosystem I and II biogenesis. This Huperzia lucidula (Shining clubmoss) protein is Protein PsbN.